The chain runs to 274 residues: NH(3)-dependent NAD(+) synthetase (274 aa).

46–53 (GISGGQDS) contributes to the ATP binding site. Mg(2+) is bound at residue Asp52. Deamido-NAD(+) is bound at residue Arg140. Thr160 is a binding site for ATP. Glu165 serves as a coordination point for Mg(2+). Deamido-NAD(+)-binding residues include Lys173 and Asp180. Residues Lys189 and Thr211 each contribute to the ATP site. 260-261 (HK) provides a ligand contact to deamido-NAD(+).

This sequence belongs to the NAD synthetase family. As to quaternary structure, homodimer.

It catalyses the reaction deamido-NAD(+) + NH4(+) + ATP = AMP + diphosphate + NAD(+) + H(+). It functions in the pathway cofactor biosynthesis; NAD(+) biosynthesis; NAD(+) from deamido-NAD(+) (ammonia route): step 1/1. Functionally, catalyzes the ATP-dependent amidation of deamido-NAD to form NAD. Uses ammonia as a nitrogen source. The chain is NH(3)-dependent NAD(+) synthetase from Pectobacterium atrosepticum (strain SCRI 1043 / ATCC BAA-672) (Erwinia carotovora subsp. atroseptica).